The sequence spans 478 residues: Alpha-1,3-mannosyl-glycoprotein 4-beta-N-acetylglucosaminyltransferase C (478 aa).

Over 1 to 23 (MFKFHQMKHIFEILDKMRCLRKR) the chain is Cytoplasmic. The helical; Signal-anchor for type II membrane protein transmembrane segment at 24 to 44 (STVSFLGVLVIFLLFMNLYIE) threads the bilayer. Topologically, residues 45–478 (DSYVLEGDKQ…IIRSISIWTS (434 aa)) are lumenal. Asn-84 and Asn-215 each carry an N-linked (GlcNAc...) asparagine glycan.

Belongs to the glycosyltransferase 54 family. It depends on a divalent metal cation as a cofactor.

The protein resides in the golgi apparatus membrane. The enzyme catalyses N(4)-{beta-D-GlcNAc-(1-&gt;2)-alpha-D-Man-(1-&gt;3)-[beta-D-GlcNAc-(1-&gt;2)-alpha-D-Man-(1-&gt;6)]-beta-D-Man-(1-&gt;4)-beta-D-GlcNAc-(1-&gt;4)-beta-D-GlcNAc}-L-asparaginyl-[protein] + UDP-N-acetyl-alpha-D-glucosamine = N(4)-{beta-D-GlcNAc-(1-&gt;2)-[beta-D-GlcNAc-(1-&gt;4)]-alpha-D-Man-(1-&gt;3)-[beta-D-GlcNAc-(1-&gt;2)-alpha-D-Man-(1-&gt;6)]-beta-D-Man-(1-&gt;4)-beta-D-GlcNAc-(1-&gt;4)-beta-D-GlcNAc}-L-asparaginyl-[protein] + UDP + H(+). It functions in the pathway protein modification; protein glycosylation. Its function is as follows. Glycosyltransferase that participates in the transfer of N-acetylglucosamine (GlcNAc) to the core mannose residues of N-linked glycans. Catalyzes the formation of the GlcNAcbeta1-4 branch on the GlcNAcbeta1-2Manalpha1-3 arm of the core structure of N-linked glycans. Essential for the production of tri- and tetra-antennary N-linked sugar chains. Does not catalyze the transfer of GlcNAc to the Manalpha1-6 arm to form GlcNAcBeta1-4Manalpha1-6 linkage ('GnT-VI' activity). The polypeptide is Alpha-1,3-mannosyl-glycoprotein 4-beta-N-acetylglucosaminyltransferase C (MGAT4C) (Macaca fascicularis (Crab-eating macaque)).